Here is a 140-residue protein sequence, read N- to C-terminus: Austinoid biosynthesis clusters protein S (140 aa).

This sequence belongs to the trt14 isomerase family. As to quaternary structure, homodimer.

The protein operates within secondary metabolite biosynthesis; terpenoid biosynthesis. Its function is as follows. Part of the gene cluster B that mediates the biosynthesis of austinol and dehydroaustinol, two fungal meroterpenoids. The first step of the pathway is the synthesis of 3,5-dimethylorsellinic acid by the polyketide synthase ausA. 3,5-dimethylorsellinic acid is then prenylated by the polyprenyl transferase ausN. Further epoxidation by the FAD-dependent monooxygenase ausM and cyclization by the probable terpene cyclase ausL lead to the formation of protoaustinoid A. Protoaustinoid A is then oxidized to spiro-lactone preaustinoid A3 by the combined action of the FAD-binding monooxygenases ausB and ausC, and the dioxygenase ausE. Acid-catalyzed keto-rearrangement and ring contraction of the tetraketide portion of preaustinoid A3 by ausJ lead to the formation of preaustinoid A4. The aldo-keto reductase ausK, with the help of ausH, is involved in the next step by transforming preaustinoid A4 into isoaustinone which is in turn hydroxylated by the P450 monooxygenase ausI to form austinolide. Finally, the cytochrome P450 monooxygenase ausG modifies austinolide to austinol. Austinol can be further modified to dehydroaustinol which forms a diffusible complex with diorcinol that initiates conidiation. Due to genetic rearrangements of the clusters and the subsequent loss of some enzymes, the end products of the Emericella nidulans austinoid biosynthesis clusters are austinol and dehydroaustinol, even if additional enzymes, such as the O-acetyltransferase ausQ and the cytochrome P450 monooxygenase ausR are still functional. AusS is necessary for austinoids production and may play a possible function as a regulator. In Emericella nidulans (strain FGSC A4 / ATCC 38163 / CBS 112.46 / NRRL 194 / M139) (Aspergillus nidulans), this protein is Austinoid biosynthesis clusters protein S.